The sequence spans 175 residues: Shikimate kinase (175 aa).

17 to 22 contributes to the ATP binding site; that stretch reads GAGKST. S21 is a Mg(2+) binding site. 3 residues coordinate substrate: D39, R63, and G85. R123 provides a ligand contact to ATP. R142 is a substrate binding site. Q159 is an ATP binding site.

Belongs to the shikimate kinase family. As to quaternary structure, monomer. Mg(2+) is required as a cofactor.

It localises to the cytoplasm. The enzyme catalyses shikimate + ATP = 3-phosphoshikimate + ADP + H(+). It participates in metabolic intermediate biosynthesis; chorismate biosynthesis; chorismate from D-erythrose 4-phosphate and phosphoenolpyruvate: step 5/7. Catalyzes the specific phosphorylation of the 3-hydroxyl group of shikimic acid using ATP as a cosubstrate. This is Shikimate kinase from Photobacterium profundum (strain SS9).